Reading from the N-terminus, the 910-residue chain is Short transient receptor potential channel 3 (910 aa).

The interval Met1–Ala93 is disordered. Topologically, residues Met1 to Phe448 are cytoplasmic. Residues Pro19 to Gly29 show a composition bias toward acidic residues. Pro residues predominate over residues Pro48–Gly58. The span at Pro59–Ser68 shows a compositional bias: low complexity. ANK repeat units lie at residues Ala100–Val129, Met135–Ile164, Asp166–Ser192, and Pro221–Arg250. Position 147 (Glu147) interacts with Ca(2+). Residues Val449–Ala466 form a helical membrane-spanning segment. The Extracellular portion of the chain corresponds to Ser467 to Thr497. Residue Asn478 is glycosylated (N-linked (GlcNAc...) asparagine). The helical transmembrane segment at Trp498–Lys516 threads the bilayer. Residues Glu514, Glu517, and Asn532 each contribute to the Ca(2+) site. Residues Glu517–Gln529 lie on the Cytoplasmic side of the membrane. Residues Leu530–Leu551 traverse the membrane as a helical segment. The Extracellular portion of the chain corresponds to Ala552–Asp595. The chain crosses the membrane as a helical span at residues Pro596–Leu619. Topologically, residues Pro620 to Asp638 are cytoplasmic. Residues Glu623 to Ala652 form an ANK 5 repeat. The helical transmembrane segment at Ile639–Ser662 threads the bilayer. Over Tyr663–His702 the chain is Extracellular. The chain crosses the membrane as a helical span at residues Lys703 to Leu728. The Cytoplasmic segment spans residues Ile729–Glu910. Residues Glu860, Glu863, Glu865, and Asp872 each coordinate Ca(2+).

Belongs to the transient receptor (TC 1.A.4) family. STrpC subfamily. TRPC3 sub-subfamily. As to quaternary structure, homotetramer. Interacts with ITPR1, ITPR3, MX1 and RNF24. Interacts with JPH2; the interaction is involved in maintaining Ca(2+) homeostasis in skeletal muscle and is mediated by JPH2 'Ser-165' phosphorylation. In terms of tissue distribution, abundantly expressed in brain. Concentrated in cerebellar Purkinje cells and sparsely localized in cerebellar granule lyer, pontine nuclei and thalamus. Lower levels detected in other tissues.

It is found in the cell membrane. The enzyme catalyses Ca(2+)(in) = Ca(2+)(out). Activated by diacylglycerol (DAG) in a membrane-delimited fashion, independently of protein kinase C. Activated by inositol 1,4,5-triphosphate receptors (ITPR) with bound IP3. May be activated by internal calcium store depletion. Inhibited by intracellular Ca(2+). Its function is as follows. Forms a receptor-activated non-selective calcium permeant cation channel. May be operated by a phosphatidylinositol second messenger system activated by receptor tyrosine kinases or G-protein coupled receptors. The chain is Short transient receptor potential channel 3 (Trpc3) from Mus musculus (Mouse).